The chain runs to 397 residues: UDP-galactose translocator (397 aa).

Residues 1-21 (MAAVGSGGSNAAAGPGAVSAG) are disordered. 10 helical membrane passes run 3–23 (AVGS…AGSL), 37–57 (YISL…IRYA), 65–85 (FFAT…CLLL), 97–117 (LALF…KLAV), 140–160 (TFQV…VLML), 169–189 (WASL…QAGG), 200–220 (GAGL…GVYF), 238–258 (LGLF…GTAV), 269–289 (PAVW…AVVV), and 315–335 (LFGF…IGAV). Low complexity predominate over residues 9 to 21 (SNAAAGPGAVSAG). The tract at residues 355-397 (ASASTSGPCTHQQPPGQPPPPKLSSHRADLSTEPFLPKSVLVK) is disordered.

The protein belongs to the nucleotide-sugar transporter family. SLC35A subfamily. Interacts with SLC35A3; the interaction is reduced in the presence of SLC35A4. Found in a complex with SLC35A3 and SLC35A4.

It is found in the golgi apparatus membrane. It carries out the reaction UMP(out) + UDP-alpha-D-galactose(in) = UMP(in) + UDP-alpha-D-galactose(out). It catalyses the reaction UDP-N-acetyl-alpha-D-galactosamine(in) + UMP(out) = UDP-N-acetyl-alpha-D-galactosamine(out) + UMP(in). The enzyme catalyses UMP(out) + UDP-alpha-D-glucose(in) = UMP(in) + UDP-alpha-D-glucose(out). The catalysed reaction is UMP(out) + UDP-N-acetyl-alpha-D-glucosamine(in) = UMP(in) + UDP-N-acetyl-alpha-D-glucosamine(out). It carries out the reaction UDP-alpha-D-galactose(in) + AMP(out) = UDP-alpha-D-galactose(out) + AMP(in). It catalyses the reaction UDP-alpha-D-galactose(in) + CMP(out) = UDP-alpha-D-galactose(out) + CMP(in). The enzyme catalyses UDP-N-acetyl-alpha-D-galactosamine(out) + UDP-alpha-D-galactose(in) = UDP-N-acetyl-alpha-D-galactosamine(in) + UDP-alpha-D-galactose(out). The catalysed reaction is UDP-N-acetyl-alpha-D-glucosamine(out) + UDP-alpha-D-galactose(in) = UDP-N-acetyl-alpha-D-glucosamine(in) + UDP-alpha-D-galactose(out). It carries out the reaction UDP-alpha-D-galactose(in) + UDP-alpha-D-glucose(out) = UDP-alpha-D-galactose(out) + UDP-alpha-D-glucose(in). It catalyses the reaction UMP(out) + CMP(in) = UMP(in) + CMP(out). The enzyme catalyses UMP(out) + AMP(in) = UMP(in) + AMP(out). In terms of biological role, transports uridine diphosphate galactose (UDP-galactose) from the cytosol into the Golgi apparatus, functioning as an antiporter that exchanges UDP-galactose for UMP. It is also able to exchange UDP-galactose for AMP and CMP, and to transport UDP-N-acetylgalactosamine (UDP-GalNAc) and other nucleotide sugars. As a provider of UDP-galactose to galactosyltransferases present in the Golgi apparatus, it is necessary for globotriaosylceramide/globoside (Gb3Cer) synthesis from lactosylceramide. This Canis lupus familiaris (Dog) protein is UDP-galactose translocator.